The sequence spans 234 residues: Serum amyloid P-component (234 aa).

The first 22 residues, 1–22 (MDKLLSLLGVSILAGLLLEAFA), serve as a signal peptide directing secretion. The 200-residue stretch at 27–226 (TGKVFVFPRQ…YAVIRPRCVA (200 aa)) folds into the Pentraxin (PTX) domain. Residue Asn-54 is glycosylated (N-linked (GlcNAc...) asparagine). The cysteines at positions 58 and 117 are disulfide-linked. The Ca(2+) site is built by Asn-81, Glu-158, Gln-159, Asp-160, and Gln-170.

Belongs to the pentraxin family. Homopentamer. Pentraxin (or pentaxin) have a discoid arrangement of 5 non-covalently bound subunits. It depends on Ca(2+) as a cofactor.

The protein localises to the secreted. This Mesocricetus auratus (Golden hamster) protein is Serum amyloid P-component (APCS).